The primary structure comprises 507 residues: ATP synthase subunit alpha, chloroplastic (507 aa).

ATP is bound at residue 170 to 177 (GDRQTGKT).

This sequence belongs to the ATPase alpha/beta chains family. As to quaternary structure, F-type ATPases have 2 components, CF(1) - the catalytic core - and CF(0) - the membrane proton channel. CF(1) has five subunits: alpha(3), beta(3), gamma(1), delta(1), epsilon(1). CF(0) has four main subunits: a, b, b' and c.

It localises to the plastid. The protein resides in the chloroplast thylakoid membrane. The enzyme catalyses ATP + H2O + 4 H(+)(in) = ADP + phosphate + 5 H(+)(out). Functionally, produces ATP from ADP in the presence of a proton gradient across the membrane. The alpha chain is a regulatory subunit. The sequence is that of ATP synthase subunit alpha, chloroplastic from Huperzia lucidula (Shining clubmoss).